Reading from the N-terminus, the 145-residue chain is Zinc finger C2H2 protein ECU06_1150 (145 aa).

Residues 35-57 (KDCARYGEAQASKHALLAHARRH) form a C2H2-type 1; atypical zinc finger. The C2H2-type 2 zinc finger occupies 63–85 (FECHLCGKDYTRSDPLKKHLLRH).

This Encephalitozoon cuniculi (strain GB-M1) (Microsporidian parasite) protein is Zinc finger C2H2 protein ECU06_1150.